The chain runs to 187 residues: MYMQVETRTSTRLHLKRAPGIRSWSLLVGILSTGLAAAYYSGDSLGWKLFYVTGCLFVAVQNLEDWEEAIFNKNTGKVILKTFSLYKKLLTLLRAGHDQVVVLLKDIQDVNVEEEKVRYFGKGYMVVLRFATGFSHPLTQSAVMGRRSDVEAIAKLITSFLELHRLESPSERSQSSDSEPDGPGGQS.

A helical membrane pass occupies residues 20 to 42 (GIRSWSLLVGILSTGLAAAYYSG). Residues 167-187 (ESPSERSQSSDSEPDGPGGQS) form a disordered region. Phosphoserine occurs at positions 168 and 170.

The protein belongs to the CYBC1 family. Interacts with CYBB; CYBC1 may act as a chaperone stabilizing Cytochrome b-245 heterodimer.

It is found in the endoplasmic reticulum membrane. Its function is as follows. Functions as a chaperone necessary for a stable expression of the CYBA and CYBB subunits of the cytochrome b-245 heterodimer. Controls the phagocyte respiratory burst and is essential for innate immunity. The sequence is that of Cytochrome b-245 chaperone 1 from Mus musculus (Mouse).